We begin with the raw amino-acid sequence, 64 residues long: MPKQKSHSGASKRFRITGSGKVVRQKANRRHLLEHKSSRRTRRLAGVEPLTKADAGRIKRLLAR.

Composition is skewed to basic residues over residues 1–15 (MPKQKSHSGASKRFR) and 23–43 (VRQKANRRHLLEHKSSRRTRR). Residues 1–64 (MPKQKSHSGA…AGRIKRLLAR (64 aa)) are disordered.

It belongs to the bacterial ribosomal protein bL35 family.

The protein is Large ribosomal subunit protein bL35 of Frankia alni (strain DSM 45986 / CECT 9034 / ACN14a).